A 301-amino-acid polypeptide reads, in one-letter code: UDP-3-O-acyl-N-acetylglucosamine deacetylase (301 aa).

Residues H81, H237, and D241 each contribute to the Zn(2+) site. Residue H264 is the Proton donor of the active site.

This sequence belongs to the LpxC family. Zn(2+) is required as a cofactor.

The catalysed reaction is a UDP-3-O-[(3R)-3-hydroxyacyl]-N-acetyl-alpha-D-glucosamine + H2O = a UDP-3-O-[(3R)-3-hydroxyacyl]-alpha-D-glucosamine + acetate. Its pathway is glycolipid biosynthesis; lipid IV(A) biosynthesis; lipid IV(A) from (3R)-3-hydroxytetradecanoyl-[acyl-carrier-protein] and UDP-N-acetyl-alpha-D-glucosamine: step 2/6. Its function is as follows. Catalyzes the hydrolysis of UDP-3-O-myristoyl-N-acetylglucosamine to form UDP-3-O-myristoylglucosamine and acetate, the committed step in lipid A biosynthesis. This Leptospira borgpetersenii serovar Hardjo-bovis (strain JB197) protein is UDP-3-O-acyl-N-acetylglucosamine deacetylase.